Reading from the N-terminus, the 156-residue chain is MSKLTHVREDGSAHMVDVTGKNETSRTAVAEGFVKMRGDVVKQLFSAGLPKGDALPVARIAGIMGAKKTPDIIPLCHPLPLGKITVDFFELADGVRIEASVKTRGVTGVEMEALTAVSTAALTVYDMIKAVDKMAVIDGIRVLSKTGGKSGDWSVQ.

Residues L75–H77 and M111–E112 each bind substrate. D126 is an active-site residue.

Belongs to the MoaC family. In terms of assembly, homohexamer; trimer of dimers.

The catalysed reaction is (8S)-3',8-cyclo-7,8-dihydroguanosine 5'-triphosphate = cyclic pyranopterin phosphate + diphosphate. It participates in cofactor biosynthesis; molybdopterin biosynthesis. Functionally, catalyzes the conversion of (8S)-3',8-cyclo-7,8-dihydroguanosine 5'-triphosphate to cyclic pyranopterin monophosphate (cPMP). The chain is Cyclic pyranopterin monophosphate synthase from Corynebacterium glutamicum (strain R).